The following is a 365-amino-acid chain: Flagellar P-ring protein (365 aa).

The first 19 residues, 1 to 19, serve as a signal peptide directing secretion; sequence MIKFLSALILLLVTTAAQA.

This sequence belongs to the FlgI family. In terms of assembly, the basal body constitutes a major portion of the flagellar organelle and consists of four rings (L,P,S, and M) mounted on a central rod.

It is found in the periplasm. The protein resides in the bacterial flagellum basal body. Functionally, assembles around the rod to form the L-ring and probably protects the motor/basal body from shearing forces during rotation. This is Flagellar P-ring protein from Shigella flexneri serotype 5b (strain 8401).